Reading from the N-terminus, the 254-residue chain is 4-hydroxy-tetrahydrodipicolinate reductase (254 aa).

7–12 (GASGRI) serves as a coordination point for NAD(+). Arg35 is a binding site for NADP(+). Residues 91–93 (GTT) and 115–118 (AHNM) each bind NAD(+). Residue His147 is the Proton donor/acceptor of the active site. His148 provides a ligand contact to (S)-2,3,4,5-tetrahydrodipicolinate. Residue Lys151 is the Proton donor of the active site. 157-158 (GT) serves as a coordination point for (S)-2,3,4,5-tetrahydrodipicolinate.

This sequence belongs to the DapB family.

Its subcellular location is the cytoplasm. It catalyses the reaction (S)-2,3,4,5-tetrahydrodipicolinate + NAD(+) + H2O = (2S,4S)-4-hydroxy-2,3,4,5-tetrahydrodipicolinate + NADH + H(+). The catalysed reaction is (S)-2,3,4,5-tetrahydrodipicolinate + NADP(+) + H2O = (2S,4S)-4-hydroxy-2,3,4,5-tetrahydrodipicolinate + NADPH + H(+). It participates in amino-acid biosynthesis; L-lysine biosynthesis via DAP pathway; (S)-tetrahydrodipicolinate from L-aspartate: step 4/4. Catalyzes the conversion of 4-hydroxy-tetrahydrodipicolinate (HTPA) to tetrahydrodipicolinate. The polypeptide is 4-hydroxy-tetrahydrodipicolinate reductase (Helicobacter pylori (strain Shi470)).